The primary structure comprises 312 residues: MRIAFLGTPEFSVACLAELVAAGHEIACVYSQPPAPRGRGQDLKPSPVHAFAESLGLPVRTPVSMKTAEEIEAFRALDLDAAVVVAFGQILVRDVLEAPRLGCFNLHASLLPRWRGAAPIQRAIMAGDAVTGVQVMRMSEGLDEGPVLMGEQVRIDALETAGTLHDKLAAVGSRMLPVALAAIERGGARETPQSEEGVTYAKKIKAAEARIDWTRSAAEVDRHIRGLSPFPGAWFEAPSEKGSVRVKALLSRVEDGEGAPGVALDDALLIACGANGEGGAVRLLKAQREGKGAQDAEVFLRGFPLAAGTALA.

Position 109-112 (109-112) interacts with (6S)-5,6,7,8-tetrahydrofolate; the sequence is SLLP.

This sequence belongs to the Fmt family.

The enzyme catalyses L-methionyl-tRNA(fMet) + (6R)-10-formyltetrahydrofolate = N-formyl-L-methionyl-tRNA(fMet) + (6S)-5,6,7,8-tetrahydrofolate + H(+). In terms of biological role, attaches a formyl group to the free amino group of methionyl-tRNA(fMet). The formyl group appears to play a dual role in the initiator identity of N-formylmethionyl-tRNA by promoting its recognition by IF2 and preventing the misappropriation of this tRNA by the elongation apparatus. This Caulobacter sp. (strain K31) protein is Methionyl-tRNA formyltransferase.